Here is an 838-residue protein sequence, read N- to C-terminus: Major vault protein (838 aa).

8 MVP repeats span residues 13-52, 53-114, 118-170, 171-223, 224-278, 280-328, 329-380, and 381-433; these read VHILDNNTNVTRCMVGPLVYTRKENERCLFNPKPCIVVPP, RFYC…FKLK, VNTG…HIIS, PNTA…ITLT, DTEA…IVLN, KEYC…NVVS, KDQA…IALD, and KNEG…CMSE.

As to quaternary structure, the vault ribonucleoprotein particle is a huge (400 A x 670 A) cage structure of 12.9 MDa. It consists of a dimer of half-vaults, with each half-vault comprising 39 identical major vault protein (MVP) chains, PARP4 and one or more vault RNAs (vRNAs).

The protein resides in the cytoplasm. It localises to the nucleus. In terms of biological role, required for normal vault structure. Vaults are multi-subunit structures that may act as scaffolds for proteins involved in signal transduction. Vaults may also play a role in nucleo-cytoplasmic transport. The sequence is that of Major vault protein from Trypanosoma cruzi (strain CL Brener).